The sequence spans 316 residues: Porphobilinogen deaminase (316 aa).

At cysteine 245 the chain carries S-(dipyrrolylmethanemethyl)cysteine.

The protein belongs to the HMBS family. In terms of assembly, monomer. The cofactor is dipyrromethane.

The enzyme catalyses 4 porphobilinogen + H2O = hydroxymethylbilane + 4 NH4(+). It participates in porphyrin-containing compound metabolism; protoporphyrin-IX biosynthesis; coproporphyrinogen-III from 5-aminolevulinate: step 2/4. The protein operates within porphyrin-containing compound metabolism; chlorophyll biosynthesis. In terms of biological role, tetrapolymerization of the monopyrrole PBG into the hydroxymethylbilane pre-uroporphyrinogen in several discrete steps. The sequence is that of Porphobilinogen deaminase from Prochlorococcus marinus subsp. pastoris (strain CCMP1986 / NIES-2087 / MED4).